The sequence spans 319 residues: Cytochrome c biogenesis protein CcsA (319 aa).

8 consecutive transmembrane segments (helical) span residues 14-34 (AFGG…FPGI), 36-56 (GLNR…TLTL), 69-89 (SNLY…HLFI), 97-117 (LIGA…SLAL), 142-162 (IMML…LFLI), 227-247 (TIGL…VWAN), 254-274 (WSWD…AAYL), and 288-308 (AILA…VNFL).

This sequence belongs to the CcmF/CycK/Ccl1/NrfE/CcsA family. In terms of assembly, may interact with Ccs1.

Its subcellular location is the plastid. The protein localises to the chloroplast thylakoid membrane. In terms of biological role, required during biogenesis of c-type cytochromes (cytochrome c6 and cytochrome f) at the step of heme attachment. In Pyropia yezoensis (Susabi-nori), this protein is Cytochrome c biogenesis protein CcsA.